Consider the following 173-residue polypeptide: Dual-action ribosomal maturation protein DarP (173 aa).

Belongs to the DarP family.

It is found in the cytoplasm. Member of a network of 50S ribosomal subunit biogenesis factors which assembles along the 30S-50S interface, preventing incorrect 23S rRNA structures from forming. Promotes peptidyl transferase center (PTC) maturation. This chain is Dual-action ribosomal maturation protein DarP, found in Pseudomonas putida (strain ATCC 700007 / DSM 6899 / JCM 31910 / BCRC 17059 / LMG 24140 / F1).